The primary structure comprises 480 residues: Sestrin-2 (480 aa).

Residue Met-1 is modified to N-acetylmethionine. Residues 20-45 are disordered; sequence PGGVGDSGPGEEQRESRARRGPRGPS. The N-terminal domain; mediates the alkylhydroperoxide reductase activity stretch occupies residues 66–239; it reads GLEALMSSGR…APTPPSEQSS (174 aa). The active-site Cysteine sulfenic acid (-SOH) intermediate is Cys-125. Lys-175 participates in a covalent cross-link: Glycyl lysine isopeptide (Lys-Gly) (interchain with G-Cter in ubiquitin). Residues 222 to 252 are disordered; sequence ADGSPAPQAPTPPSEQSSPPSRDPLNNSGGF. Ser-249 is subject to Phosphoserine. Residues 308–480 are C-terminal domain; mediates TORC1 regulation; that stretch reads PHPDMLCFVE…ALRAITRYMT (173 aa). Residues 374-377, Thr-386, and Glu-451 contribute to the L-leucine site; that span reads TYNT.

Belongs to the sestrin family. In terms of assembly, interacts with the GATOR2 complex which is composed of MIOS, SEC13, SEH1L, WDR24 and WDR59; the interaction is negatively regulated by leucine. Conveys leucine availability via direct interaction with SEH1L and WDR24 components of the GATOR2 complex. Interacts with RRAGA, RRAGB, RRAGC and RRAGD; may function as a guanine nucleotide dissociation inhibitor for RRAGs and regulate them. May interact with the TORC2 complex. Interacts with KEAP1, RBX1, SQSTM and ULK1; to regulate the degradation of KEAP1. May also associate with the complex composed of TSC1, TSC2 and the AMP-responsive protein kinase/AMPK to regulate TORC1 signaling. May interact with PRDX1. Post-translationally, phosphorylated by ULK1 at multiple sites. Ubiquitinated at Lys-175 by RNF167 via 'Lys-63'-linked polyubiquitination in response to leucine deprivation: ubiquitination promotes SESN2-interaction with the GATOR2 complex, leading to inhibit the TORC1 signaling pathway. Deubiquitinated at Lys-175 by STAMBPL1, promoting the TORC1 signaling pathway. Ubiquitinated by RNF186; ubiquitination mediates proteasomal degradation.

It localises to the cytoplasm. It carries out the reaction a hydroperoxide + L-cysteinyl-[protein] = S-hydroxy-L-cysteinyl-[protein] + an alcohol. Functionally, functions as an intracellular leucine sensor that negatively regulates the mTORC1 signaling pathway through the GATOR complex. In absence of leucine, binds the GATOR subcomplex GATOR2 and prevents mTORC1 signaling. Binding of leucine to SESN2 disrupts its interaction with GATOR2 thereby activating the TORC1 signaling pathway. This stress-inducible metabolic regulator also plays a role in protection against oxidative and genotoxic stresses. May negatively regulate protein translation in response to endoplasmic reticulum stress, via mTORC1. May positively regulate the transcription by NFE2L2 of genes involved in the response to oxidative stress by facilitating the SQSTM1-mediated autophagic degradation of KEAP1. May also mediate TP53 inhibition of TORC1 signaling upon genotoxic stress. Moreover, may prevent the accumulation of reactive oxygen species (ROS) through the alkylhydroperoxide reductase activity born by the N-terminal domain of the protein. Was originally reported to contribute to oxidative stress resistance by reducing PRDX1. However, this could not be confirmed. The protein is Sestrin-2 of Pongo abelii (Sumatran orangutan).